Reading from the N-terminus, the 954-residue chain is Bifunctional glutamine synthetase adenylyltransferase/adenylyl-removing enzyme (954 aa).

The tract at residues 1 to 452 (MAVQKDSNKS…HFKATVGGEE (452 aa)) is adenylyl removase. Positions 458 to 954 (EHWTAQLWNV…ILAIYQAILE (497 aa)) are adenylyl transferase.

Belongs to the GlnE family. The cofactor is Mg(2+).

The enzyme catalyses [glutamine synthetase]-O(4)-(5'-adenylyl)-L-tyrosine + phosphate = [glutamine synthetase]-L-tyrosine + ADP. It catalyses the reaction [glutamine synthetase]-L-tyrosine + ATP = [glutamine synthetase]-O(4)-(5'-adenylyl)-L-tyrosine + diphosphate. Functionally, involved in the regulation of glutamine synthetase GlnA, a key enzyme in the process to assimilate ammonia. When cellular nitrogen levels are high, the C-terminal adenylyl transferase (AT) inactivates GlnA by covalent transfer of an adenylyl group from ATP to specific tyrosine residue of GlnA, thus reducing its activity. Conversely, when nitrogen levels are low, the N-terminal adenylyl removase (AR) activates GlnA by removing the adenylyl group by phosphorolysis, increasing its activity. The regulatory region of GlnE binds the signal transduction protein PII (GlnB) which indicates the nitrogen status of the cell. The protein is Bifunctional glutamine synthetase adenylyltransferase/adenylyl-removing enzyme of Shewanella oneidensis (strain ATCC 700550 / JCM 31522 / CIP 106686 / LMG 19005 / NCIMB 14063 / MR-1).